The sequence spans 189 residues: MLLSDRDIRAEIAAKRLALEPFDDALVQPSSIDVRLDRMFRVFNNTRYTHIDPAMQQDELTTLVEPAEGEPFVLHPGEFVLGSTLELCTLPDDLAGRLEGKSSLGRLGLLTHSTAGFIDPGFSGHITLELSNVANLPITLWPGMKIGQLCLLRLTSPAENPYGSAAVGSKYQGQRGPTPSRSHLNFIKS.

DCTP-binding positions include 101-106 (KSSLGR), D119, 127-129 (TLE), Q148, Y162, and Q174. E129 (proton donor/acceptor) is an active-site residue. Residues 166-189 (AVGSKYQGQRGPTPSRSHLNFIKS) are disordered. The span at 171–189 (YQGQRGPTPSRSHLNFIKS) shows a compositional bias: polar residues.

The protein belongs to the dCTP deaminase family. Homotrimer.

The enzyme catalyses dCTP + 2 H2O = dUMP + NH4(+) + diphosphate. The protein operates within pyrimidine metabolism; dUMP biosynthesis; dUMP from dCTP: step 1/1. In terms of biological role, bifunctional enzyme that catalyzes both the deamination of dCTP to dUTP and the hydrolysis of dUTP to dUMP without releasing the toxic dUTP intermediate. The protein is dCTP deaminase, dUMP-forming of Mycolicibacterium smegmatis (strain ATCC 700084 / mc(2)155) (Mycobacterium smegmatis).